The following is a 1052-amino-acid chain: uncharacterized protein (1052 aa).

It belongs to the IIV-6 050L family.

This is an uncharacterized protein from Invertebrate iridescent virus 6 (IIV-6).